A 242-amino-acid chain; its full sequence is Triosephosphate isomerase (242 aa).

Residue 8–10 (NWK) coordinates substrate. Catalysis depends on His-91, which acts as the Electrophile. Glu-155 serves as the catalytic Proton acceptor. The substrate site is built by Gly-161 and Ser-192.

The protein belongs to the triosephosphate isomerase family. Homodimer.

Its subcellular location is the cytoplasm. The catalysed reaction is D-glyceraldehyde 3-phosphate = dihydroxyacetone phosphate. The protein operates within carbohydrate biosynthesis; gluconeogenesis. It functions in the pathway carbohydrate degradation; glycolysis; D-glyceraldehyde 3-phosphate from glycerone phosphate: step 1/1. Involved in the gluconeogenesis. Catalyzes stereospecifically the conversion of dihydroxyacetone phosphate (DHAP) to D-glyceraldehyde-3-phosphate (G3P). This chain is Triosephosphate isomerase, found in Wolbachia pipientis wMel.